The primary structure comprises 163 residues: Lectin-like protein EP153R (163 aa).

Residues 1–26 (MFSNKKYIGLINKKEGLKKKIDDYSI) lie on the Cytoplasmic side of the membrane. A helical transmembrane segment spans residues 27 to 47 (LIIGILIGTNILSLIINIIGE). Residues 48–163 (INKPICYQNN…YTDLLFICSK (116 aa)) are Extracellular-facing. Residues C63 and C74 are joined by a disulfide bond. The segment at 63–162 (CPKDWVGYNN…HYTDLLFICS (100 aa)) is lectin-like. 8 N-linked (GlcNAc...) asparagine; by host glycosylation sites follow: N84, N96, N97, N103, N109, N115, N129, and N135. C92 and C161 are joined by a disulfide.

The protein belongs to the asfivirus lectin-like protein family. As to quaternary structure, homodimer.

It is found in the host endoplasmic reticulum membrane. Functionally, down-regulates MHC-I expression by impairing the appropriate configuration or presentation into the plasma membrane of the latter. Participates in viral hemadsorption, which may help viral spread. Reduces the transactivating activity of host TP53, thus inhibiting apoptosis. Non-essential for virus growth in swine macrophage cell cultures. This African swine fever virus (isolate Warthog/Namibia/Wart80/1980) (ASFV) protein is Lectin-like protein EP153R.